The sequence spans 223 residues: Ethylene-inducing xylanase 1 (223 aa).

The signal sequence occupies residues 1–19; the sequence is MVSFTSLLAAFSVVSGVLT. The region spanning 34–223 is the GH11 domain; the sequence is KRTPSSTGTS…SSGSATMTVS (190 aa). The active-site Nucleophile is the E119. Residues 174–184 form a nuclear localization signal region; the sequence is RRTKRTSGSVN. E210 functions as the Proton donor in the catalytic mechanism.

Belongs to the glycosyl hydrolase 11 (cellulase G) family.

It is found in the secreted. It localises to the host nucleus. It carries out the reaction Endohydrolysis of (1-&gt;4)-beta-D-xylosidic linkages in xylans.. It functions in the pathway glycan degradation; xylan degradation. Its function is as follows. Endo-1,4-beta-xylanase involved in the hydrolysis of xylan, a major structural heterogeneous polysaccharide found in plant biomass representing the second most abundant polysaccharide in the biosphere, after cellulose. Acts as an effector that localizes to the host nucleus to contribute to the virulence process. Induces host innate immunity responses; triggers BAK1-and SOBIR1-dependent cell death, salicylic acid signaling and jasmonic acid signaling. Does not exhibit any cell death when transiently expressed in N.benthamiana. This Verticillium dahliae (strain VdLs.17 / ATCC MYA-4575 / FGSC 10137) (Verticillium wilt) protein is Ethylene-inducing xylanase 1.